The primary structure comprises 186 residues: ATP synthase subunit delta (186 aa).

This sequence belongs to the ATPase delta chain family. In terms of assembly, F-type ATPases have 2 components, F(1) - the catalytic core - and F(0) - the membrane proton channel. F(1) has five subunits: alpha(3), beta(3), gamma(1), delta(1), epsilon(1). F(0) has three main subunits: a(1), b(2) and c(10-14). The alpha and beta chains form an alternating ring which encloses part of the gamma chain. F(1) is attached to F(0) by a central stalk formed by the gamma and epsilon chains, while a peripheral stalk is formed by the delta and b chains.

The protein localises to the cell membrane. Its function is as follows. F(1)F(0) ATP synthase produces ATP from ADP in the presence of a proton or sodium gradient. F-type ATPases consist of two structural domains, F(1) containing the extramembraneous catalytic core and F(0) containing the membrane proton channel, linked together by a central stalk and a peripheral stalk. During catalysis, ATP synthesis in the catalytic domain of F(1) is coupled via a rotary mechanism of the central stalk subunits to proton translocation. Functionally, this protein is part of the stalk that links CF(0) to CF(1). It either transmits conformational changes from CF(0) to CF(1) or is implicated in proton conduction. The polypeptide is ATP synthase subunit delta (Symbiobacterium thermophilum (strain DSM 24528 / JCM 14929 / IAM 14863 / T)).